The primary structure comprises 417 residues: MVTSPELKAYAQAARAAARALSTASPRAKNTALLAIAAKLEAQQEALFAANREDLEAAQAAGLSKAKLDRLRLDEKVLRDLRTGLQQVAEMPDPVGEIEGLQIRPNGLQVGRMRVPLGVIGFIYESRPNATVEASALCLKAGNAILLRGGKEAWHSNRALVGLMQAALQEAGLPREAIQLVPTTDRSAILEMCHLADLLDLIIPRGGRGLIELVQREARIPVLAHTEGINHLFVDESTDPGCAVQIALNGKTQRPSTCNSLEKVLVHQRIAPVFLPMLAQAMQKAGVELRGDEATCALIPARPATPEDWQTEYLDLILTVKVVNSLEEALEHIARYGSHHTEAICTNHHAHAMRFLREVDASLVLVNASPRFNDGFQLGLGAEIGISTSKLHAYGPMGVKELTTTKFVALGSGQVRD.

The protein belongs to the gamma-glutamyl phosphate reductase family.

Its subcellular location is the cytoplasm. It carries out the reaction L-glutamate 5-semialdehyde + phosphate + NADP(+) = L-glutamyl 5-phosphate + NADPH + H(+). The protein operates within amino-acid biosynthesis; L-proline biosynthesis; L-glutamate 5-semialdehyde from L-glutamate: step 2/2. Catalyzes the NADPH-dependent reduction of L-glutamate 5-phosphate into L-glutamate 5-semialdehyde and phosphate. The product spontaneously undergoes cyclization to form 1-pyrroline-5-carboxylate. In Meiothermus ruber, this protein is Gamma-glutamyl phosphate reductase.